A 125-amino-acid polypeptide reads, in one-letter code: uncharacterized protein (125 aa).

It is found in the plastid. This is an uncharacterized protein from Euglena longa (Euglenophycean alga).